The primary structure comprises 328 residues: Nuclear transcription factor Y subunit A-8 (328 aa).

The interval 54-86 (KNISFQDQDSSSTLSSAQSSNDVTSSGDDNPSR) is disordered. Low complexity predominate over residues 57–75 (SFQDQDSSSTLSSAQSSND). Over residues 76 to 86 (VTSSGDDNPSR) the composition is skewed to polar residues. The Subunit association domain (SAD) signature appears at 175-198 (FVNAKQFHAIMRRRQQRAKLEAQN). The NFYA/HAP2-type DNA-binding region spans 205 to 230 (KPYLHESRHVHALKRPRGSGGRFLNT).

The protein belongs to the NFYA/HAP2 subunit family. In terms of assembly, heterotrimeric transcription factor composed of three components, NF-YA, NF-YB and NF-YC. NF-YB and NF-YC must interact and dimerize for NF-YA association and DNA binding. In terms of tissue distribution, expressed in the whole plant, except roots.

The protein localises to the nucleus. Its function is as follows. Stimulates the transcription of various genes by recognizing and binding to a CCAAT motif in promoters. In Arabidopsis thaliana (Mouse-ear cress), this protein is Nuclear transcription factor Y subunit A-8 (NFYA8).